Consider the following 128-residue polypeptide: Small ribosomal subunit protein bS6 (128 aa).

Positions 97 to 128 (TTPSPMMKEEKSRSLTAAPATDEAKPAEAESA) are disordered. A compositionally biased stretch (basic and acidic residues) spans 118–128 (DEAKPAEAESA).

Belongs to the bacterial ribosomal protein bS6 family.

Functionally, binds together with bS18 to 16S ribosomal RNA. This is Small ribosomal subunit protein bS6 from Aromatoleum aromaticum (strain DSM 19018 / LMG 30748 / EbN1) (Azoarcus sp. (strain EbN1)).